The primary structure comprises 672 residues: tRNA 5-methylaminomethyl-2-thiouridine biosynthesis bifunctional protein MnmC (672 aa).

A tRNA (mnm(5)s(2)U34)-methyltransferase region spans residues 1-243 (MTSIKNAELG…KREMIAGSME (243 aa)). The segment at 269-672 (IGGGIASAAL…LRKGKAITEL (404 aa)) is FAD-dependent cmnm(5)s(2)U34 oxidoreductase.

The protein in the N-terminal section; belongs to the methyltransferase superfamily. tRNA (mnm(5)s(2)U34)-methyltransferase family. In the C-terminal section; belongs to the DAO family. It depends on FAD as a cofactor.

The protein localises to the cytoplasm. It catalyses the reaction 5-aminomethyl-2-thiouridine(34) in tRNA + S-adenosyl-L-methionine = 5-methylaminomethyl-2-thiouridine(34) in tRNA + S-adenosyl-L-homocysteine + H(+). In terms of biological role, catalyzes the last two steps in the biosynthesis of 5-methylaminomethyl-2-thiouridine (mnm(5)s(2)U) at the wobble position (U34) in tRNA. Catalyzes the FAD-dependent demodification of cmnm(5)s(2)U34 to nm(5)s(2)U34, followed by the transfer of a methyl group from S-adenosyl-L-methionine to nm(5)s(2)U34, to form mnm(5)s(2)U34. The protein is tRNA 5-methylaminomethyl-2-thiouridine biosynthesis bifunctional protein MnmC of Vibrio campbellii (strain ATCC BAA-1116).